The primary structure comprises 318 residues: Large ribosomal subunit protein uL10 (318 aa).

Position 24 is a phosphotyrosine (Tyr-24). Thr-59 is subject to Phosphothreonine. Lys-264 participates in a covalent cross-link: Glycyl lysine isopeptide (Lys-Gly) (interchain with G-Cter in ubiquitin). The disordered stretch occupies residues 293–318 (TAAPAKVEAKEESEESDEDMGFGLFD). Lys-298 is covalently cross-linked (Glycyl lysine isopeptide (Lys-Gly) (interchain with G-Cter in SUMO1); alternate). A Glycyl lysine isopeptide (Lys-Gly) (interchain with G-Cter in SUMO2); alternate cross-link involves residue Lys-298. Residues 303-312 (EESEESDEDM) show a composition bias toward acidic residues. A phosphoserine mark is found at Ser-305 and Ser-308.

The protein belongs to the universal ribosomal protein uL10 family. P0 forms a pentameric complex by interaction with dimers of P1 and P2. Identified in a IGF2BP1-dependent mRNP granule complex containing untranslated mRNAs. Interacts with APEX1. Interacts with FMR1. Post-translationally, ubiquitinated at Lys-264 by RNF14 and RNF25 in response to ribosome collisions (ribosome stalling).

The protein resides in the nucleus. It localises to the cytoplasm. In terms of biological role, ribosomal protein P0 is the functional equivalent of E.coli protein L10. The polypeptide is Large ribosomal subunit protein uL10 (RPLP0) (Bos taurus (Bovine)).